The following is a 148-amino-acid chain: Gametocyte-specific factor 1-like (148 aa).

2 consecutive CHHC U11-48K-type zinc fingers follow at residues 6-33 (FEICPYDPHHRIPLSRFQYHLASCRRKN) and 40-67 (MATCKYNACHVVPIKNLEEHEAVCVNRS). The Zn(2+) site is built by cysteine 9, histidine 15, histidine 25, cysteine 29, cysteine 43, histidine 49, histidine 59, and cysteine 63. The segment at 67–99 (SAVEEEDTENPLKVSPPSSEQNDDTQQVSPCLP) is disordered. Positions 82-95 (PPSSEQNDDTQQVS) are enriched in polar residues.

It belongs to the UPF0224 (FAM112) family.

This Homo sapiens (Human) protein is Gametocyte-specific factor 1-like (GTSF1L).